The primary structure comprises 609 residues: Protein kinase PVPK-1 (609 aa).

Positions 1–19 (MESSVNGVDSLSEVQNSVS) are enriched in polar residues. Disordered stretches follow at residues 1 to 51 (MESS…GHQT) and 80 to 100 (PTKL…EPNG). A Protein kinase domain is found at 229–565 (FRLLKKLGCG…ATEIKQHPFF (337 aa)). ATP contacts are provided by residues 235–243 (LGCGDIGSV) and Lys-258. The active-site Proton acceptor is Asp-354. Residues 429 to 448 (GKSKKDKKSKPKNDMHNQVT) are disordered.

This sequence belongs to the protein kinase superfamily. Ser/Thr protein kinase family.

It carries out the reaction L-seryl-[protein] + ATP = O-phospho-L-seryl-[protein] + ADP + H(+). The enzyme catalyses L-threonyl-[protein] + ATP = O-phospho-L-threonyl-[protein] + ADP + H(+). In Phaseolus vulgaris (Kidney bean), this protein is Protein kinase PVPK-1.